The chain runs to 126 residues: MNTRGCVNNNKMIFMNALGLQPQSKVKIIAHKTLEKFKRDAYTCFKGVKAIKNELKTYNLTLQQYNEALNQCALNDSRWRDTNNWHHDIKEGVKINKRHIYRVNFNSKTKEIKEYYYIKVECYVNN.

The protein resides in the virion. This Bombyx mori nuclear polyhedrosis virus (BmNPV) protein is Putative 15 kDa capsid protein (P15).